The primary structure comprises 449 residues: tRNA modification GTPase MnmE (449 aa).

Arginine 24, glutamate 81, and lysine 121 together coordinate (6S)-5-formyl-5,6,7,8-tetrahydrofolate. The region spanning 218–375 (GLVVAITGPP…LIAALGKFAA (158 aa)) is the TrmE-type G domain. GTP is bound by residues 228–233 (NVGKST), 247–253 (SPHAGTT), and 272–275 (DTAG). The Mg(2+) site is built by serine 232 and threonine 253. A (6S)-5-formyl-5,6,7,8-tetrahydrofolate-binding site is contributed by lysine 449.

This sequence belongs to the TRAFAC class TrmE-Era-EngA-EngB-Septin-like GTPase superfamily. TrmE GTPase family. Homodimer. Heterotetramer of two MnmE and two MnmG subunits. Requires K(+) as cofactor.

The protein resides in the cytoplasm. Exhibits a very high intrinsic GTPase hydrolysis rate. Involved in the addition of a carboxymethylaminomethyl (cmnm) group at the wobble position (U34) of certain tRNAs, forming tRNA-cmnm(5)s(2)U34. In Rhodopseudomonas palustris (strain BisB18), this protein is tRNA modification GTPase MnmE.